A 394-amino-acid chain; its full sequence is Chalcone synthase (394 aa).

Cysteine 168 is an active-site residue.

This sequence belongs to the thiolase-like superfamily. Chalcone/stilbene synthases family.

The catalysed reaction is (E)-4-coumaroyl-CoA + 3 malonyl-CoA + 3 H(+) = 2',4,4',6'-tetrahydroxychalcone + 3 CO2 + 4 CoA. Its pathway is secondary metabolite biosynthesis; flavonoid biosynthesis. In terms of biological role, the primary product of this enzyme is 4,2',4',6'-tetrahydroxychalcone (also termed naringenin-chalcone or chalcone) which can under specific conditions spontaneously isomerize into naringenin. In Raphanus sativus (Radish), this protein is Chalcone synthase (CHS).